Reading from the N-terminus, the 470-residue chain is Ribulose bisphosphate carboxylase large chain (470 aa).

Residues Asn115 and Thr165 each contribute to the substrate site. Lys167 acts as the Proton acceptor in catalysis. Lys169 serves as a coordination point for substrate. Lys193, Asp195, and Glu196 together coordinate Mg(2+). The residue at position 193 (Lys193) is an N6-carboxylysine. His286 serves as the catalytic Proton acceptor. Substrate-binding residues include Arg287, His319, and Ser371.

Belongs to the RuBisCO large chain family. Type I subfamily. In terms of assembly, heterohexadecamer of 8 large chains and 8 small chains. It depends on Mg(2+) as a cofactor.

The protein resides in the carboxysome. The enzyme catalyses 2 (2R)-3-phosphoglycerate + 2 H(+) = D-ribulose 1,5-bisphosphate + CO2 + H2O. It carries out the reaction D-ribulose 1,5-bisphosphate + O2 = 2-phosphoglycolate + (2R)-3-phosphoglycerate + 2 H(+). Its function is as follows. RuBisCO catalyzes two reactions: the carboxylation of D-ribulose 1,5-bisphosphate, the primary event in carbon dioxide fixation, as well as the oxidative fragmentation of the pentose substrate in the photorespiration process. Both reactions occur simultaneously and in competition at the same active site. The sequence is that of Ribulose bisphosphate carboxylase large chain from Prochlorococcus marinus (strain MIT 9303).